Consider the following 346-residue polypeptide: Ribosomal RNA small subunit methyltransferase H (346 aa).

S-adenosyl-L-methionine is bound by residues 53–55, D70, F97, D114, and Q121; that span reads GGY.

Belongs to the methyltransferase superfamily. RsmH family.

The protein resides in the cytoplasm. It carries out the reaction cytidine(1402) in 16S rRNA + S-adenosyl-L-methionine = N(4)-methylcytidine(1402) in 16S rRNA + S-adenosyl-L-homocysteine + H(+). Specifically methylates the N4 position of cytidine in position 1402 (C1402) of 16S rRNA. This is Ribosomal RNA small subunit methyltransferase H from Bartonella henselae (strain ATCC 49882 / DSM 28221 / CCUG 30454 / Houston 1) (Rochalimaea henselae).